A 1414-amino-acid chain; its full sequence is Protein KATNIP homolog (1414 aa).

7 disordered regions span residues 1–32, 80–116, 139–158, 712–731, 756–783, 823–861, and 924–943; these read MHGKSLGSSRKNDSRSKIRQEKESNIDFDEKH, QQSTQDLARESSKSSKIPDDGCSHLPGRRSQTAPGKI, GPNTKYSEDFESDDDMNEDQ, VSATSSKEPPPCPRDDNDLT, SSSSNFQQKSHNQPTKNHLNASSSTFTN, KMDNEDDLENFSNQSSYNSDRPVSGRRKTVQMQDKSEKY, and QQQKAGKQSDSTKNGSSLMP. 2 stretches are compositionally biased toward basic and acidic residues: residues 10 to 32 and 86 to 101; these read RKNDSRSKIRQEKESNIDFDEKH and LARESSKSSKIPDDGC. Residues 147-158 are compositionally biased toward acidic residues; that stretch reads DFESDDDMNEDQ. Composition is skewed to polar residues over residues 832–843 and 924–940; these read NFSNQSSYNSDR and QQQKAGKQSDSTKNGSS.

The protein localises to the cytoplasm. The protein resides in the cytoskeleton. It localises to the cilium axoneme. Its subcellular location is the cilium basal body. May control cilium integrity. In Xenopus laevis (African clawed frog), this protein is Protein KATNIP homolog.